Consider the following 119-residue polypeptide: Ribosome-binding factor A (119 aa).

This sequence belongs to the RbfA family. As to quaternary structure, monomer. Binds 30S ribosomal subunits, but not 50S ribosomal subunits or 70S ribosomes.

It localises to the cytoplasm. Functionally, one of several proteins that assist in the late maturation steps of the functional core of the 30S ribosomal subunit. Associates with free 30S ribosomal subunits (but not with 30S subunits that are part of 70S ribosomes or polysomes). Required for efficient processing of 16S rRNA. May interact with the 5'-terminal helix region of 16S rRNA. In Wolinella succinogenes (strain ATCC 29543 / DSM 1740 / CCUG 13145 / JCM 31913 / LMG 7466 / NCTC 11488 / FDC 602W) (Vibrio succinogenes), this protein is Ribosome-binding factor A.